A 327-amino-acid chain; its full sequence is MDKETNDNEYRRQSEHRTSAPKRKKKKKIRKLPIILLIVVILLIALVVYIVHSYNSGVEYAKKHAKDVKVHQFNGPVKNDGKISILVLGADKAQGGQSRTDSIMVVQYDFINKKMKMMSVMRDIYADIPGYGKHKINSAYALGGPKLLRKTLDKNLGINPEYYAVVDFTGFEKMIDELMPEGVPINVEKDMSKNIGVSLKKGNHRLNGKELLGYARFRHDPEGDFGRVRRQQQVMQTLKKEMVNFRTVVKLPKVAGILRGYVNTNIPDSGIFQTGLSFGIRGEKDVKSLTVPIKNSYEDVNTNTDGSALQINKNTNKQAIKDFLDED.

The segment covering 1–18 has biased composition (basic and acidic residues); the sequence is MDKETNDNEYRRQSEHRT. Residues 1-24 are disordered; sequence MDKETNDNEYRRQSEHRTSAPKRK. Topologically, residues 1–31 are cytoplasmic; the sequence is MDKETNDNEYRRQSEHRTSAPKRKKKKKIRK. Residues 32-52 traverse the membrane as a helical; Signal-anchor for type II membrane protein segment; sequence LPIILLIVVILLIALVVYIVH. Residues 53–327 are Extracellular-facing; sequence SYNSGVEYAK…QAIKDFLDED (275 aa).

Belongs to the LytR/CpsA/Psr (LCP) family.

It localises to the cell membrane. Its function is as follows. Involved in SarA attenuation. Affects resistance to oxacillin and teicoplanin, as well as the synthesis of virulence factors. The sequence is that of Regulatory protein MsrR (msrR) from Staphylococcus aureus (strain Mu50 / ATCC 700699).